Here is a 111-residue protein sequence, read N- to C-terminus: Small ribosomal subunit protein bS16 (111 aa).

Belongs to the bacterial ribosomal protein bS16 family.

The polypeptide is Small ribosomal subunit protein bS16 (Rickettsia canadensis (strain McKiel)).